The sequence spans 751 residues: MSNETKCPFSHAAGGGTTNRDWWPNQLRLDLLSQHSSKSNPLGGDFNYAKAFKSLDFAAVKKDLAALMTDSQDWWPADFGHYGPLFIRMAWHSAGTYRIGDGRGGAGRGQQRFAPLNSWPDNASLDKARRLLWPIKQKYGQKISWADLMILAGNVALETMGFKTFGFGGGREDTWEPDADVSWGKEKTWLGGDLRYGKGAAGKDEGVVVADEALHGTETSRTDSGRNLENPLAAVQMGLIYVNPEGPDGNPDPLAAAHDIRESFGRMAMDDEETVALIAGGHAFGKTHGAGPADNIGPEPEGADLERQGLGWASTFGTGKGADTITSGLEVTWSNTPTKWGNSYLENLFGHEWELTKSPAGANQWVAKDAAETIPHAYDPAKKLRPTMLTTDLSLRFDPAYEKISRRFLEHPDQLADAFARAWFKLIHRDMGPRARYLGPEVPAEELLWQDPIPAVDHPLVNEQDVAALKQKILASGLPVSQLVQTAWASASTFRGSDKRGGANGARIRLAPQKDWAANEPEQLAKVLKVLEGIQAEFNGAQSGGKKISLADLIVLAGGAGIEQAAQKAGHRVTVPFTPGRMDASQEQTDVQSVGALEPIADGFRNFLKGKYNIRAEDLLIDKAQLLTLTAPEMTVLIGGLRVLNVHTGQDAHGVFTDRPETLSNDFFRNLLDMRTEWKPLSEARDVFEGRDAKTGAKKWTGTRVDLVFGSNSQLRALCEVYASEDGQEKFVRDFVAAWAKVMNLDRFDVA.

Residues 1–12 form the signal peptide; it reads MSNETKCPFSHA. Residues 91–241 constitute a cross-link (tryptophyl-tyrosyl-methioninium (Trp-Tyr) (with M-267)); that stretch reads WHSAGTYRIG…LAAVQMGLIY (151 aa). H92 functions as the Proton acceptor in the catalytic mechanism. Positions 241–267 form a cross-link, tryptophyl-tyrosyl-methioninium (Tyr-Met) (with W-91); it reads YVNPEGPDGNPDPLAAAHDIRESFGRM. Heme b is bound at residue H282.

The protein belongs to the peroxidase family. Peroxidase/catalase subfamily. As to quaternary structure, homodimer or homotetramer. Requires heme b as cofactor. Post-translationally, formation of the three residue Trp-Tyr-Met cross-link is important for the catalase, but not the peroxidase activity of the enzyme.

The catalysed reaction is H2O2 + AH2 = A + 2 H2O. It carries out the reaction 2 H2O2 = O2 + 2 H2O. Functionally, bifunctional enzyme with both catalase and broad-spectrum peroxidase activity. In Cupriavidus necator (strain ATCC 17699 / DSM 428 / KCTC 22496 / NCIMB 10442 / H16 / Stanier 337) (Ralstonia eutropha), this protein is Catalase-peroxidase.